Consider the following 466-residue polypeptide: Fumarate hydratase class II (466 aa).

Substrate contacts are provided by residues Ser-100–Thr-102, Arg-128, His-131–Asp-134, Ser-141–Asn-143, and Thr-189. Residues Gly-122–Asn-137 show a composition bias toward basic and acidic residues. The interval Gly-122–Asn-143 is disordered. His-190 acts as the Proton donor/acceptor in catalysis. Residue Ser-320 is part of the active site. Substrate is bound by residues Ser-321 and Lys-326 to Asn-328.

Belongs to the class-II fumarase/aspartase family. Fumarase subfamily. In terms of assembly, homotetramer.

It is found in the cytoplasm. It carries out the reaction (S)-malate = fumarate + H2O. Its pathway is carbohydrate metabolism; tricarboxylic acid cycle; (S)-malate from fumarate: step 1/1. In terms of biological role, involved in the TCA cycle. Catalyzes the stereospecific interconversion of fumarate to L-malate. This chain is Fumarate hydratase class II, found in Myxococcus xanthus (strain DK1622).